Reading from the N-terminus, the 95-residue chain is Aspartyl/glutamyl-tRNA(Asn/Gln) amidotransferase subunit C (95 aa).

It belongs to the GatC family. As to quaternary structure, heterotrimer of A, B and C subunits.

It catalyses the reaction L-glutamyl-tRNA(Gln) + L-glutamine + ATP + H2O = L-glutaminyl-tRNA(Gln) + L-glutamate + ADP + phosphate + H(+). The catalysed reaction is L-aspartyl-tRNA(Asn) + L-glutamine + ATP + H2O = L-asparaginyl-tRNA(Asn) + L-glutamate + ADP + phosphate + 2 H(+). Its function is as follows. Allows the formation of correctly charged Asn-tRNA(Asn) or Gln-tRNA(Gln) through the transamidation of misacylated Asp-tRNA(Asn) or Glu-tRNA(Gln) in organisms which lack either or both of asparaginyl-tRNA or glutaminyl-tRNA synthetases. The reaction takes place in the presence of glutamine and ATP through an activated phospho-Asp-tRNA(Asn) or phospho-Glu-tRNA(Gln). This Chlorobium chlorochromatii (strain CaD3) protein is Aspartyl/glutamyl-tRNA(Asn/Gln) amidotransferase subunit C.